A 211-amino-acid chain; its full sequence is FMN-dependent NADH:quinone oxidoreductase 2 (211 aa).

FMN-binding positions include S10 and 17–19 (SRS).

Belongs to the azoreductase type 1 family. Homodimer. FMN serves as cofactor.

It catalyses the reaction 2 a quinone + NADH + H(+) = 2 a 1,4-benzosemiquinone + NAD(+). The catalysed reaction is N,N-dimethyl-1,4-phenylenediamine + anthranilate + 2 NAD(+) = 2-(4-dimethylaminophenyl)diazenylbenzoate + 2 NADH + 2 H(+). Functionally, quinone reductase that provides resistance to thiol-specific stress caused by electrophilic quinones. In terms of biological role, also exhibits azoreductase activity. Catalyzes the reductive cleavage of the azo bond in aromatic azo compounds to the corresponding amines. This is FMN-dependent NADH:quinone oxidoreductase 2 from Listeria innocua serovar 6a (strain ATCC BAA-680 / CLIP 11262).